Reading from the N-terminus, the 253-residue chain is Shikimate dehydrogenase (NADP(+)) (253 aa).

Shikimate is bound by residues 13–15 (SIS) and T59. The Proton acceptor role is filled by K63. E74 contributes to the NADP(+) binding site. 2 residues coordinate shikimate: N83 and D94. Residues 115–119 (GAGGA), 139–144 (NRTIER), and V199 each bind NADP(+). Y201 contributes to the shikimate binding site. G221 is a binding site for NADP(+).

This sequence belongs to the shikimate dehydrogenase family. In terms of assembly, homodimer.

It catalyses the reaction shikimate + NADP(+) = 3-dehydroshikimate + NADPH + H(+). It participates in metabolic intermediate biosynthesis; chorismate biosynthesis; chorismate from D-erythrose 4-phosphate and phosphoenolpyruvate: step 4/7. Functionally, involved in the biosynthesis of the chorismate, which leads to the biosynthesis of aromatic amino acids. Catalyzes the reversible NADPH linked reduction of 3-dehydroshikimate (DHSA) to yield shikimate (SA). The polypeptide is Shikimate dehydrogenase (NADP(+)) (Thermotoga maritima (strain ATCC 43589 / DSM 3109 / JCM 10099 / NBRC 100826 / MSB8)).